We begin with the raw amino-acid sequence, 360 residues long: Phospho-N-acetylmuramoyl-pentapeptide-transferase (360 aa).

The next 10 membrane-spanning stretches (helical) occupy residues 26–46, 72–92, 94–114, 132–152, 168–188, 199–219, 236–256, 263–283, 288–308, and 338–358; these read AIVS…RMIA, PTMG…LWAY, SNPY…IGFV, WKYF…YLAG, VMPQ…VGTG, GLAI…AWAT, AGEL…FLWF, VFMG…IAVL, FLLV…ILQV, and VIVR…ATLK.

It belongs to the glycosyltransferase 4 family. MraY subfamily. The cofactor is Mg(2+).

The protein resides in the cell inner membrane. It catalyses the reaction UDP-N-acetyl-alpha-D-muramoyl-L-alanyl-gamma-D-glutamyl-meso-2,6-diaminopimeloyl-D-alanyl-D-alanine + di-trans,octa-cis-undecaprenyl phosphate = di-trans,octa-cis-undecaprenyl diphospho-N-acetyl-alpha-D-muramoyl-L-alanyl-D-glutamyl-meso-2,6-diaminopimeloyl-D-alanyl-D-alanine + UMP. Its pathway is cell wall biogenesis; peptidoglycan biosynthesis. Catalyzes the initial step of the lipid cycle reactions in the biosynthesis of the cell wall peptidoglycan: transfers peptidoglycan precursor phospho-MurNAc-pentapeptide from UDP-MurNAc-pentapeptide onto the lipid carrier undecaprenyl phosphate, yielding undecaprenyl-pyrophosphoryl-MurNAc-pentapeptide, known as lipid I. This chain is Phospho-N-acetylmuramoyl-pentapeptide-transferase, found in Enterobacter sp. (strain 638).